The sequence spans 110 residues: Large ribosomal subunit protein uL23c (110 aa).

The protein belongs to the universal ribosomal protein uL23 family. As to quaternary structure, part of the 50S ribosomal subunit.

It localises to the plastid. Its subcellular location is the chloroplast. Binds to 23S rRNA. The protein is Large ribosomal subunit protein uL23c (rpl23) of Porphyra purpurea (Red seaweed).